The following is a 200-amino-acid chain: MQGFKQHTGLVVPLDAANVDTDAIIPKQFLQKVSRLGFGKHLFHDWRFLDDAGEQPNPEFVMNHARYQGASILLARENFGCGSSREHAPWALADYGIRAMIAPSFADIFYSNSINNQMVPVRLTEQEVDELFQYVQATEGAQIEVDLEALKVRANDKEYSFGIDDFRRHCLLNGLDHIGLTLQHEDKIAAFEADIPAFLR.

Belongs to the LeuD family. LeuD type 1 subfamily. As to quaternary structure, heterodimer of LeuC and LeuD.

The enzyme catalyses (2R,3S)-3-isopropylmalate = (2S)-2-isopropylmalate. It participates in amino-acid biosynthesis; L-leucine biosynthesis; L-leucine from 3-methyl-2-oxobutanoate: step 2/4. In terms of biological role, catalyzes the isomerization between 2-isopropylmalate and 3-isopropylmalate, via the formation of 2-isopropylmaleate. In Vibrio vulnificus (strain CMCP6), this protein is 3-isopropylmalate dehydratase small subunit.